A 476-amino-acid polypeptide reads, in one-letter code: Adenosylhomocysteinase (476 aa).

Substrate-binding residues include Thr61, Asp140, and Glu200. 201 to 203 (TTT) contacts NAD(+). Substrate-binding residues include Lys230 and Asp234. NAD(+) is bound by residues Asn235, 264 to 269 (GYGDVG), Glu287, Asn322, 343 to 345 (IGH), and Asn389.

Belongs to the adenosylhomocysteinase family. The cofactor is NAD(+).

Its subcellular location is the cytoplasm. It catalyses the reaction S-adenosyl-L-homocysteine + H2O = L-homocysteine + adenosine. The protein operates within amino-acid biosynthesis; L-homocysteine biosynthesis; L-homocysteine from S-adenosyl-L-homocysteine: step 1/1. Functionally, may play a key role in the regulation of the intracellular concentration of adenosylhomocysteine. This chain is Adenosylhomocysteinase, found in Acidovorax ebreus (strain TPSY) (Diaphorobacter sp. (strain TPSY)).